Consider the following 225-residue polypeptide: NAD(P)H-hydrate epimerase (225 aa).

In terms of domain architecture, YjeF N-terminal spans 9 to 209; it reads MQTIDNYTVE…DIGLLTPQDF (201 aa). 57–61 is a binding site for (6S)-NADPHX; it reads NNGAD. Asparagine 58 and aspartate 119 together coordinate K(+). Residues 123-129 and aspartate 152 contribute to the (6S)-NADPHX site; that span reads GTGLNNL. A K(+)-binding site is contributed by threonine 155.

Belongs to the NnrE/AIBP family. It depends on K(+) as a cofactor.

It catalyses the reaction (6R)-NADHX = (6S)-NADHX. It carries out the reaction (6R)-NADPHX = (6S)-NADPHX. Its function is as follows. Catalyzes the epimerization of the S- and R-forms of NAD(P)HX, a damaged form of NAD(P)H that is a result of enzymatic or heat-dependent hydration. This is a prerequisite for the S-specific NAD(P)H-hydrate dehydratase to allow the repair of both epimers of NAD(P)HX. This chain is NAD(P)H-hydrate epimerase, found in Leuconostoc kimchii (strain IMSNU 11154 / KCTC 2386 / IH25).